The sequence spans 555 residues: Protein FAM234A (555 aa).

Positions 1–22 are enriched in basic and acidic residues; that stretch reads MMDNKDLEAEIHPLKNEDKKSQ. The segment at 1 to 40 is disordered; the sequence is MMDNKDLEAEIHPLKNEDKKSQENPGNLPRNEDNLKSKPV. The Cytoplasmic portion of the chain corresponds to 1-49; sequence MMDNKDLEAEIHPLKNEDKKSQENPGNLPRNEDNLKSKPVPSRLSRCRT. A Phosphoserine modification is found at serine 21. Residues 50–70 traverse the membrane as a helical; Signal-anchor for type II membrane protein segment; the sequence is VAFFLSLFTCLFVVFVLSFII. The Extracellular segment spans residues 71 to 555; it reads PCPDRPSSQG…FSRLRYRSEM (485 aa). N-linked (GlcNAc...) asparagine glycans are attached at residues asparagine 116, asparagine 120, asparagine 317, asparagine 392, and asparagine 476.

This sequence belongs to the FAM234 family.

It localises to the membrane. The polypeptide is Protein FAM234A (Mus musculus (Mouse)).